Reading from the N-terminus, the 213-residue chain is TVP38/TMEM64 family membrane protein YtxB (213 aa).

Helical transmembrane passes span 9 to 29 (WLAV…YLNV), 34 to 54 (IRVW…GISI), 58 to 78 (LVLF…GPLL), 81 to 101 (LYTL…AGLF), 159 to 179 (AVGI…FLAG), and 181 to 201 (LPAF…PFIF).

Belongs to the TVP38/TMEM64 family.

It is found in the cell membrane. In Bacillus subtilis (strain 168), this protein is TVP38/TMEM64 family membrane protein YtxB (ytxB).